The chain runs to 299 residues: HTH-type transcriptional regulator ArgP (299 aa).

Residues 4-60 (LDYKLLLALDAVMQEQNFERAAQRLHITQSAISQRIKQLEQQFAEPLLIRSQPLQAT) form the HTH lysR-type domain. The H-T-H motif DNA-binding region spans 21–40 (FERAAQRLHITQSAISQRIK).

It belongs to the LysR transcriptional regulatory family. In terms of assembly, homodimer.

Its function is as follows. Controls the transcription of genes involved in arginine and lysine metabolism. The chain is HTH-type transcriptional regulator ArgP from Aeromonas salmonicida.